Consider the following 144-residue polypeptide: Transcriptional regulator SlyA (144 aa).

The region spanning 2-135 (ESTLGSDLAR…LVGLIGKLEQ (134 aa)) is the HTH marR-type domain. A DNA-binding region (H-T-H motif) is located at residues 49–72 (QIQLAKAIGIEQPSLVRTLDQLEE).

The protein belongs to the SlyA family. In terms of assembly, homodimer.

Transcription regulator that can specifically activate or repress expression of target genes. The sequence is that of Transcriptional regulator SlyA from Serratia proteamaculans (strain 568).